Reading from the N-terminus, the 671-residue chain is NADPH--cytochrome P450 reductase (671 aa).

Residues 1–14 (MSAEHVEEVVSEEP) lie on the Lumenal side of the membrane. The helical transmembrane segment at 15 to 35 (FLGTLDIALLVVLLVGATWYF) threads the bilayer. The Cytoplasmic segment spans residues 36–671 (MRSRKKEEAP…QKRYSADVWS (636 aa)). One can recognise a Flavodoxin-like domain in the interval 77–221 (LVVFYGSQTG…DFITWKDRFW (145 aa)). FMN is bound by residues 83-88 (SQTGTA), 135-138 (ATYG), 170-179 (LGNKTYEHYN), and Asp-205. In terms of domain architecture, FAD-binding FR-type spans 276–515 (KNPFLASVIV…FIRKSQFRLP (240 aa)). Residue Arg-295 coordinates NADP(+). FAD contacts are provided by residues 451–454 (RYYS), 469–471 (TAV), Tyr-475, and 485–488 (GVAT). NADP(+)-binding positions include Thr-529, 589–590 (SR), 595–599 (KIYVT), and Asp-632. An FAD-binding site is contributed by Trp-670.

It belongs to the NADPH--cytochrome P450 reductase family. The protein in the N-terminal section; belongs to the flavodoxin family. In the C-terminal section; belongs to the flavoprotein pyridine nucleotide cytochrome reductase family. FAD serves as cofactor. Requires FMN as cofactor.

It is found in the endoplasmic reticulum membrane. The enzyme catalyses 2 oxidized [cytochrome P450] + NADPH = 2 reduced [cytochrome P450] + NADP(+) + H(+). Functionally, this enzyme is required for electron transfer from NADP to cytochrome P450 in microsomes. It can also provide electron transfer to heme oxygenase and cytochrome B5. The chain is NADPH--cytochrome P450 reductase from Musca domestica (House fly).